A 2151-amino-acid chain; its full sequence is MLSSGVETQPVPLDSSMSAVVQELYSELPVSVSRELHADPEPSVIPDVKPGASSSLLSQNRALPLELQRTHVESCCEETYETLDHGSEPGRCGLVDSTAGGSVASGILDRAKRSESMEPKVFRDPGGQAGIIREPSEGAKEDPHQHSTAAEEKTSPSQEDLLMQSSKELSHVDLPEDFLRSKEGNVQITAETLLKSAEVQGMKVNGTKTDNNEGHKNGNVSKDLSAGCGEFQEVDKIMTSDEVSETSTLVTPEPLTFVDPVLTEATPKEKECEELKSCPWLSLPGNSAISNVDNGKEELCKPNLVCEADDNHQQLHGHHNEQPSSTHDSPTATSPLKENSEVSCFTSDLSGPESRTISLENCGFEGGGLLKRSAEKTDSSYFYRGDDQGKNLASREENEERLLIPRSERGGPFLFNAREPEKEISGRCSGEKEPVVSPKENIHNNCIQDSLHTGNSSSLMPNSFTEATEVMLNKNDLKITVHVQGNLTNPEDHKETFTNMSHPGGHSEESSFSSLMQIEEAGQTTPVEPNILSKSFYTKDCNSLVSIQRNLEGNTQLNEASCNDFLFERKSIVSLMPEDQISPVSEVLKPKQGTALLLPSPEFDYRPESEKVIQTSHDDIPLLDEQSIACEMNELSCTNELVVNKVESECVLNQQVSLNSQEHANLPTDSLLHLNKEMPLATGRDAHQSHHPPLEGRADVIADIQTIPIQTKIKDISPPGNQTCGASSNCPTLNIKPVSLERKKEMADSGTKALHSRLRSNKREAAGFPQVVSVIECHSVQSQDISSCHRVRKNVSQENMCSASAAFKSSKISLQVDNSLITKYENAFQHRDHCCQGTGHSVEKSSCKVSYTSQERELDGKETNGSLPGDKIRNKMVAGLLNSGISNKTIHTSSSIKLSEEGLEGKEQDVSKETVFCKYNISDHAIQELNQTVNIPGPEKVLDQSPTVMFSSFKNVKSVETLDQKADEVLDCQSNQNRPDECKSEGQSAKEMLSSDQRETVTEPHGEVNHNQKDLLVSSGSNNSLPCGSPKKCNLKGAFVKMSGCDESTEGMVDIVYTDCSNKLAEGVLDVKASNLLDCGARQEKLAFQEDSRSTLSRRELDAAHTGTTGQDSDFPVTAASTVDFLKIKKSCEENVCRSLKDCEMEKCPDSCAHEMESVADHEPNKRILGRVNLSLNDSHYGQQDKGTSLRETQEMTEGSRLEPNSEFGKESTFGISSKESMSCHDESSVSLRSLKSIEIMPSQENSETNVNSEETDLKNLCKPKDGEMLCENVKDCTVLPEMKEIVSRDWSNSSDRDSVCTCVEKNACKACHPHENSSDRHLPLTVKTDIKVKGEETEEHQRGRLGYLTVGEQSEELVTRETGDGDPVSNISQTHFKCRGILNHAEKQQSPEVLDYMLQKEEKYIRQQKAHTISQQCISSSLLLDDAQNQNQPKADKDESTMINEITLAKLAKDSIVAQTQKLEDQKEERLHHPLRKDTESCTSPCLLGAPRKAQDPSSAGCDQIHGAFAKKGVLPLKKQPHRTCKKVSYQEQIIVGRKIGKIRSSAFLKSSSNPIPTKAHRLLSLCTLSAPTRLEPETAPTKSLVSHIPKQMSTPCHPLRSLNFRKTTKESALLNKLSILASKLAPAMKTQKLRYRRCSSELLPMAKSYKRLRYKRLLDGFSSSTEQLNPYLAASGWDKRPNSKPMALYSLESIKMTFIDLSNKMPSLLFGSEIFPVSFHVKSSSSDCTTESSRTFPEHCAPARLALGEALQCPSQPPKWTFSFFLSHGCPGMATFREDTGVHSQTHTQAPPQPPAPLQDYGGTAIVQTRADCSVLGLHTLLALCSPGCYRIWTKKRSFSSHMPTMQRLFMTQFTQGLKGLRSPASIADKVFCSLPYSVGRVLSIWSQHGPSVCSFEISSLHSPHCKRQPSLGTTSSHTMLPYVPLPGMEATYNTSGSQTRLEPPFPALVPKSCLVAESAVSKLLLSASEFQVRGLDELDGVKAACPCPQSSPPEQKEAEPEKRPKKVSQIRIRKTIPRPDPNLTPMGLPRPKRLKKKEFSLEEIYTNKNYKSPPANRCLETIFEEPKERNGTLISISQQKRKRVLEFQDFTVPRKRRARGKVKVAGSFTRAQKAAVQSRELDALLIQKLMELETFFAKEEEQEQSSGC.

Composition is skewed to basic and acidic residues over residues 112 to 123 (KRSESMEPKVFR) and 134 to 154 (EPSE…EEKT). 3 disordered regions span residues 112–160 (KRSE…SQED), 206–225 (GTKT…KDLS), and 314–350 (QLHG…SDLS). Ser157 carries the post-translational modification Phosphoserine. Polar residues predominate over residues 322–350 (QPSSTHDSPTATSPLKENSEVSCFTSDLS). A phosphoserine mark is found at Ser582 and Ser945. A disordered region spans residues 974–1017 (SNQNRPDECKSEGQSAKEMLSSDQRETVTEPHGEVNHNQKDLLV). Positions 996 to 1013 (DQRETVTEPHGEVNHNQK) are enriched in basic and acidic residues. At Ser1029 the chain carries Phosphoserine. Over residues 1091–1103 (DSRSTLSRRELDA) the composition is skewed to basic and acidic residues. 4 disordered regions span residues 1091 to 1115 (DSRS…DSDF), 1178 to 1226 (DSHY…SCHD), 1782 to 1802 (TGVH…PLQD), and 1986 to 2012 (AACP…KVSQ). Positions 1178-1187 (DSHYGQQDKG) are enriched in polar residues. Over residues 1188–1201 (TSLRETQEMTEGSR) the composition is skewed to basic and acidic residues.

The protein is Protein PRR14L (PRR14L) of Homo sapiens (Human).